A 153-amino-acid chain; its full sequence is SsrA-binding protein (153 aa).

Residues 129–153 (KREDMKKKDQSREMAQALRERSKSH) are disordered.

This sequence belongs to the SmpB family.

It is found in the cytoplasm. Its function is as follows. Required for rescue of stalled ribosomes mediated by trans-translation. Binds to transfer-messenger RNA (tmRNA), required for stable association of tmRNA with ribosomes. tmRNA and SmpB together mimic tRNA shape, replacing the anticodon stem-loop with SmpB. tmRNA is encoded by the ssrA gene; the 2 termini fold to resemble tRNA(Ala) and it encodes a 'tag peptide', a short internal open reading frame. During trans-translation Ala-aminoacylated tmRNA acts like a tRNA, entering the A-site of stalled ribosomes, displacing the stalled mRNA. The ribosome then switches to translate the ORF on the tmRNA; the nascent peptide is terminated with the 'tag peptide' encoded by the tmRNA and targeted for degradation. The ribosome is freed to recommence translation, which seems to be the essential function of trans-translation. This is SsrA-binding protein from Geobacter metallireducens (strain ATCC 53774 / DSM 7210 / GS-15).